The following is a 485-amino-acid chain: MRISIILLSLLFLSLHSLIKADITKLSVCGSARAVPTATQNPKPTCVNVNSQGIPTAGLNSAAFDNGVRCGQCYELTGPLGKTVVMVADVCDAGSACTQSDLFNFIIPNEEFDKIGNRSDYGNIFSLCYQIVSCGYSGNVQGVFTGPSSSPNTFTYFLSVVFSNNNVAIKKVLIKGLSWPLYESLTGQNGNWKWNKNSYELQFPATLYITSNTGETITYKMNSRPITNQPIDLDFQFNPKAISSLENNECSMALLPQYIYQDGLSYGWVDSQSFNYAKFTDKSSDTKSGSGTCINAQLDGHGGVKFTREGDFQTSYLDKLSFDIKTSADSSSFAVYFGDVATKNIDPLVASTWTTVELSVKSLTNNTVEGSITFFNNQADPINIWLDNIKWTYTDDAPLDQPTMDLIEVNNKPSTTSGTGTTSSKPSSSSGGVSGGGIGSESSIYGLSSENQENQSGHHASSNTNILLPTTFVFFISITILSLLF.

The first 21 residues, 1–21, serve as a signal peptide directing secretion; that stretch reads MRISIILLSLLFLSLHSLIKA. Over 22-464 the chain is Extracellular; that stretch reads DITKLSVCGS…QSGHHASSNT (443 aa). Residues 26–139 form the Expansin-like EG45 domain; that stretch reads LSVCGSARAV…QIVSCGYSGN (114 aa). Intrachain disulfides connect Cys29-Cys70 and Cys73-Cys134. Asn117 and Asn365 each carry an N-linked (GlcNAc...) asparagine glycan. The interval 408-436 is disordered; sequence EVNNKPSTTSGTGTTSSKPSSSSGGVSGG. Residues 414-431 are compositionally biased toward low complexity; that stretch reads STTSGTGTTSSKPSSSSG. A glycan (N-linked (GlcNAc...) asparagine) is linked at Asn454. A helical membrane pass occupies residues 465–485; that stretch reads NILLPTTFVFFISITILSLLF.

Belongs to the expansin family. Expansin A subfamily.

The protein localises to the membrane. Its function is as follows. May serve to lubricate the movement of the cellulose microfibrils during cell growth and wall extension and/or may serve to maintain the fluid state of the slug cell wall. The polypeptide is Expansin-like protein 8 (expl8) (Dictyostelium discoideum (Social amoeba)).